Consider the following 604-residue polypeptide: UvrABC system protein C (604 aa).

Residues Thr-12–Leu-90 form the GIY-YIG domain. In terms of domain architecture, UVR spans Lys-200–Thr-235.

This sequence belongs to the UvrC family. As to quaternary structure, interacts with UvrB in an incision complex.

The protein localises to the cytoplasm. In terms of biological role, the UvrABC repair system catalyzes the recognition and processing of DNA lesions. UvrC both incises the 5' and 3' sides of the lesion. The N-terminal half is responsible for the 3' incision and the C-terminal half is responsible for the 5' incision. The protein is UvrABC system protein C of Trichlorobacter lovleyi (strain ATCC BAA-1151 / DSM 17278 / SZ) (Geobacter lovleyi).